The sequence spans 72 residues: Cell division protein ZapB (72 aa).

Positions 1–71 form a coiled coil; the sequence is MSLEILDQLE…IRSLLGKFDN (71 aa).

The protein belongs to the ZapB family. As to quaternary structure, homodimer. The ends of the coiled-coil dimer bind to each other, forming polymers. Interacts with FtsZ.

It is found in the cytoplasm. Its function is as follows. Non-essential, abundant cell division factor that is required for proper Z-ring formation. It is recruited early to the divisome by direct interaction with FtsZ, stimulating Z-ring assembly and thereby promoting cell division earlier in the cell cycle. Its recruitment to the Z-ring requires functional FtsA or ZipA. The polypeptide is Cell division protein ZapB (Haemophilus influenzae (strain 86-028NP)).